The chain runs to 844 residues: Protein translocase subunit SecA (844 aa).

Residues Gln89, 107–111, and Asp497 contribute to the ATP site; that span reads GEGKT. 4 residues coordinate Zn(2+): Cys829, Cys831, Cys840, and His841.

It belongs to the SecA family. As to quaternary structure, monomer and homodimer. Part of the essential Sec protein translocation apparatus which comprises SecA, SecYEG and auxiliary proteins SecDF. Other proteins may also be involved. The cofactor is Zn(2+).

It is found in the cell membrane. Its subcellular location is the cytoplasm. It carries out the reaction ATP + H2O + cellular proteinSide 1 = ADP + phosphate + cellular proteinSide 2.. Part of the Sec protein translocase complex. Interacts with the SecYEG preprotein conducting channel. Has a central role in coupling the hydrolysis of ATP to the transfer of proteins into and across the cell membrane, serving as an ATP-driven molecular motor driving the stepwise translocation of polypeptide chains across the membrane. This Streptococcus suis (strain 98HAH33) protein is Protein translocase subunit SecA.